A 362-amino-acid polypeptide reads, in one-letter code: 3-isopropylmalate dehydrogenase (362 aa).

Residue 77–88 participates in NAD(+) binding; it reads GPKWGTGAVRPE. Arg-95, Arg-105, Arg-134, and Asp-223 together coordinate substrate. 3 residues coordinate Mg(2+): Asp-223, Asp-248, and Asp-252. 287–298 provides a ligand contact to NAD(+); it reads GSAPDLPKGKVN.

It belongs to the isocitrate and isopropylmalate dehydrogenases family. Homodimer. Mg(2+) is required as a cofactor. It depends on Mn(2+) as a cofactor.

It is found in the cytoplasm. The enzyme catalyses (2R,3S)-3-isopropylmalate + NAD(+) = 4-methyl-2-oxopentanoate + CO2 + NADH. The protein operates within amino-acid biosynthesis; L-leucine biosynthesis; L-leucine from 3-methyl-2-oxobutanoate: step 3/4. Its function is as follows. Catalyzes the oxidation of 3-carboxy-2-hydroxy-4-methylpentanoate (3-isopropylmalate) to 3-carboxy-4-methyl-2-oxopentanoate. The product decarboxylates to 4-methyl-2 oxopentanoate. The protein is 3-isopropylmalate dehydrogenase (LEU2) of Zygosaccharomyces bailii.